Here is a 193-residue protein sequence, read N- to C-terminus: Transcriptional activator GvpE2 (193 aa).

Residue 143–148 (KRKVYR) participates in DNA binding. The leucine-zipper stretch occupies residues 153 to 184 (QAAIEHVDSVVLQLLTFAVGLQTIMADCIVNQ).

Homodimer. Interacts with endogenous GvpD, also with GvpD from H.mediterranei.

Its subcellular location is the cytoplasm. Its activity is regulated as follows. Degraded once GvpD is translated; degradation requires 'Arg-494' of GvpD; tested in transgenic H.volcanii. Fusion of green fluorescent protein to its C-terminus partially protects it from degradation. Functionally, plays a regulatory role in gas vesicle synthesis, required to activate transcription of the c-gvpA operon. Gas vesicles are hollow, gas filled proteinaceous nanostructures found in several microbial planktonic microorganisms. They allow positioning of halobacteria at the optimal depth for growth in the poorly aerated, shallow brine pools of their habitat. Expression of 2 c-vac DNA fragments containing 2 divergently transcribed regions (gvpE-gvpF-gvpG-gvpH-gvpI-gvpJ-gvpK-gvpL-gvpM and gvpA-gvpC-gvpN-gvpO) allows H.volcanii to produce gas vesicles. All site-directed mutagenesis is tested in H.volcanii. The chain is Transcriptional activator GvpE2 from Halobacterium salinarum (strain ATCC 700922 / JCM 11081 / NRC-1) (Halobacterium halobium).